Here is a 179-residue protein sequence, read N- to C-terminus: ATP-dependent protease subunit HslV (179 aa).

Residue threonine 7 is part of the active site. Residues alanine 163, cysteine 166, and threonine 169 each contribute to the Na(+) site.

This sequence belongs to the peptidase T1B family. HslV subfamily. As to quaternary structure, a double ring-shaped homohexamer of HslV is capped on each side by a ring-shaped HslU homohexamer. The assembly of the HslU/HslV complex is dependent on binding of ATP.

It localises to the cytoplasm. It carries out the reaction ATP-dependent cleavage of peptide bonds with broad specificity.. Allosterically activated by HslU binding. Its function is as follows. Protease subunit of a proteasome-like degradation complex believed to be a general protein degrading machinery. In Amoebophilus asiaticus (strain 5a2), this protein is ATP-dependent protease subunit HslV.